Reading from the N-terminus, the 180-residue chain is MSRIGKKPIPIPDKVTVTLNGANVAVKGPKGSLERTLPEKVTVTQEDNTIVVSPVDNSRTARERHGLCRTLVANMIEGVSQGYSKQLEIIGVGYRAQVQGNKLTLNVGYSKPVEMQMPEGVTAAMGEKNTQVIISGIDKEVVGNTAAKVRAVRPPEPYKGKGIRYQGEYIRRKAGKAGKK.

This sequence belongs to the universal ribosomal protein uL6 family. In terms of assembly, part of the 50S ribosomal subunit.

Functionally, this protein binds to the 23S rRNA, and is important in its secondary structure. It is located near the subunit interface in the base of the L7/L12 stalk, and near the tRNA binding site of the peptidyltransferase center. In Picosynechococcus sp. (strain ATCC 27264 / PCC 7002 / PR-6) (Agmenellum quadruplicatum), this protein is Large ribosomal subunit protein uL6.